The primary structure comprises 568 residues: Phosphoprotein (568 aa).

Disordered regions lie at residues M1–R22 and P40–E320. A compositionally biased stretch (basic and acidic residues) spans I7–G20. Residues D33 to T41 are N0 binding. Residues L50–P60 show a composition bias toward polar residues. S68 carries the phosphoserine; by host modification. Residues R83–A101 show a composition bias toward basic and acidic residues. S125 bears the Phosphoserine; by host mark. Over residues G150–D168 the composition is skewed to basic and acidic residues. Over residues A191–A206 the composition is skewed to polar residues. S192, S249, and S257 each carry phosphoserine; by host. Residues F344 to S411 form a multimerization region. The stretch at Y364–H429 forms a coiled coil. The l protein binding stretch occupies residues E412–T445. A phosphoserine; by host mark is found at S447 and S449. Positions D479–N568 are interaction with the nucleocapsid (N-RNA).

Belongs to the respirovirus P protein family. As to quaternary structure, homotetramer. Interacts (via multimerization domain) with polymerase L; this interaction forms the polymerase complex. Interacts (via N-terminus) with N0; this interaction allows P to chaperon N0 before encapsidation and form the N-P complex. Interacts (via C-terminus) with N-RNA template; this interaction positions the polymerase on the template. Phosphorylated by PKC/PRKCZ, and other unknown kinases. Phosphorylation is necessary for viral transcription and replication. The N-terminus contains the majority of phosphorylated sites. Ser-249 is the major site of phosphorylation, but is not necessary for most functions.

It localises to the host cytoplasm. Functionally, essential cofactor of the RNA polymerase L that plays a central role in the transcription and replication by forming the polymerase complex with RNA polymerase L and recruiting L to the genomic N-RNA template for RNA synthesis. Also plays a central role in the encapsidation of nascent RNA chains by forming the encapsidation complex with the nucleocapsid protein N (N-P complex). Acts as a chaperone for newly synthesized free N protein, so-called N0, allowing encapsidation of nascent RNA chains during replication. The nucleoprotein protein N prevents excessive phosphorylation of P, which leads to down-regulation of viral transcription/ replication. Participates, together with N, in the formation of viral factories (viroplasms), which are large inclusions in the host cytoplasm where replication takes place. Recruits host PI4KB and remodel the host endoplasmic reticulum membrane to form viral replication factories. The protein is Phosphoprotein (P/V/C) of Sendai virus (strain 6/94) (SeV).